Consider the following 539-residue polypeptide: Chaperonin GroEL 2 (539 aa).

Residues 30-33 (TLGP), lysine 51, 87-91 (DGTTT), glycine 415, 480-482 (NAA), and aspartate 496 contribute to the ATP site.

Belongs to the chaperonin (HSP60) family. In terms of assembly, forms a cylinder of 14 subunits composed of two heptameric rings stacked back-to-back. Interacts with the co-chaperonin GroES.

The protein localises to the cytoplasm. It catalyses the reaction ATP + H2O + a folded polypeptide = ADP + phosphate + an unfolded polypeptide.. Its function is as follows. Together with its co-chaperonin GroES, plays an essential role in assisting protein folding. The GroEL-GroES system forms a nano-cage that allows encapsulation of the non-native substrate proteins and provides a physical environment optimized to promote and accelerate protein folding. In Sphingopyxis alaskensis (strain DSM 13593 / LMG 18877 / RB2256) (Sphingomonas alaskensis), this protein is Chaperonin GroEL 2.